The chain runs to 167 residues: MIIFTDVISGDELLSDAYDVKLVDDVVYEADCAMVNVNNGDVDIGANPSAEEGGEDLEDGTETVNNVVYSFRLQQTSFDKKSFMTYMKGYMKRVKAHLAEKNPEAIEAFENGAKTYFKKVVSSFGDWDFYTGESMDPDGMVVLLNYREDGTTPYVAIWKHGVSEDKI.

Residues 1-167 (MIIFTDVISG…WKHGVSEDKI (167 aa)) form the TCTP domain.

This sequence belongs to the TCTP family.

It localises to the cytoplasm. It is found in the cytoskeleton. Functionally, involved in protein synthesis. Involved in microtubule stabilization. The chain is Translationally-controlled tumor protein homolog from Debaryomyces hansenii (strain ATCC 36239 / CBS 767 / BCRC 21394 / JCM 1990 / NBRC 0083 / IGC 2968) (Yeast).